We begin with the raw amino-acid sequence, 84 residues long: MAHKKAGGSTRNGRDSESKRLGVKRFGGESVLAGNIIVRQRGTKFHAGVNVGIGRDHTLFALTDGKVKFEVKGPNNRKFISIEA.

The disordered stretch occupies residues Met1 to Gly22.

It belongs to the bacterial ribosomal protein bL27 family.

The protein is Large ribosomal subunit protein bL27 of Shewanella oneidensis (strain ATCC 700550 / JCM 31522 / CIP 106686 / LMG 19005 / NCIMB 14063 / MR-1).